Reading from the N-terminus, the 229-residue chain is 1-(5-phosphoribosyl)-5-[(5-phosphoribosylamino)methylideneamino] imidazole-4-carboxamide isomerase (229 aa).

The active-site Proton acceptor is aspartate 8. Catalysis depends on aspartate 125, which acts as the Proton donor.

This sequence belongs to the HisA/HisF family.

The protein localises to the cytoplasm. It carries out the reaction 1-(5-phospho-beta-D-ribosyl)-5-[(5-phospho-beta-D-ribosylamino)methylideneamino]imidazole-4-carboxamide = 5-[(5-phospho-1-deoxy-D-ribulos-1-ylimino)methylamino]-1-(5-phospho-beta-D-ribosyl)imidazole-4-carboxamide. Its pathway is amino-acid biosynthesis; L-histidine biosynthesis; L-histidine from 5-phospho-alpha-D-ribose 1-diphosphate: step 4/9. This Thermococcus onnurineus (strain NA1) protein is 1-(5-phosphoribosyl)-5-[(5-phosphoribosylamino)methylideneamino] imidazole-4-carboxamide isomerase.